A 1213-amino-acid chain; its full sequence is A disintegrin and metalloproteinase with thrombospondin motifs 19 (1213 aa).

The first 27 residues, 1 to 27 (MGKNREMRLTHICCCCLLYQLGFLSNG), serve as a signal peptide directing secretion. Positions 28–322 (IVSELQFAPD…KIAESGRGKR (295 aa)) are excised as a propeptide. Disordered regions lie at residues 49-161 (WRRE…PPPA) and 192-215 (FLAP…AASA). Gly residues predominate over residues 52–71 (EPVDPAGGSGGSADPGWVRG). The span at 110–119 (RPPPPSEGEE) shows a compositional bias: acidic residues. Residues 120 to 139 (DEELESQELPRGSSGAAALS) are compositionally biased toward low complexity. Over residues 140-155 (PGAPASWQPPPPPQPP) the composition is skewed to pro residues. An N-linked (GlcNAc...) asparagine glycan is attached at Asn-266. A Cysteine switch motif is present at residues 298 to 305 (HYCGIISD). Position 300 (Cys-300) interacts with Zn(2+). The Peptidase M12B domain occupies 331-551 (YNIETVVVAD…KASNCLLQTN (221 aa)). Intrachain disulfides connect Cys-407-Cys-472, Cys-447-Cys-454, Cys-466-Cys-546, Cys-505-Cys-530, Cys-575-Cys-599, Cys-586-Cys-607, Cys-594-Cys-626, Cys-620-Cys-631, Cys-651-Cys-686, Cys-655-Cys-691, and Cys-666-Cys-676. His-488 provides a ligand contact to Zn(2+). Residue Glu-489 is part of the active site. The Zn(2+) site is built by His-492 and His-498. Residues 552 to 639 (PQSVNSVMVP…ECTSRTSAPE (88 aa)) form the Disintegrin domain. Residues 640-692 (HLAGEWSLWSPCSRTCSAGISSRERKCPGLDSEARDCNGPRKQYRICENPPCP) form the TSP type-1 1 domain. Residues 797-920 (IIKGDFNHTR…PENQSSKAPE (124 aa)) form a spacer region. Asn-803, Asn-913, Asn-955, and Asn-1015 each carry an N-linked (GlcNAc...) asparagine glycan. TSP type-1 domains follow at residues 921-981 (PLFM…NEQP), 982-1043 (CQTR…QDCM), 1045-1089 (VWEA…EDCE), and 1093-1150 (KCYV…QPCN). Intrachain disulfides connect Cys-994–Cys-1037, Cys-998–Cys-1042, and Cys-1009–Cys-1026. Residues 1166–1205 (LTFKCLGDQWPVYCRVIREKNLCQDMRWYQRCCETCRDFY) enclose the PLAC domain.

It depends on Zn(2+) as a cofactor. In terms of processing, the precursor is cleaved by a furin endopeptidase. Post-translationally, glycosylated. Can be O-fucosylated by POFUT2 on a serine or a threonine residue found within the consensus sequence C1-X(2)-(S/T)-C2-G of the TSP type-1 repeat domains where C1 and C2 are the first and second cysteine residue of the repeat, respectively. Fucosylated repeats can then be further glycosylated by the addition of a beta-1,3-glucose residue by the glucosyltransferase, B3GALTL. Fucosylation mediates the efficient secretion of ADAMTS family members. Can also be C-glycosylated with one or two mannose molecules on tryptophan residues within the consensus sequence W-X-X-W of the TPRs, and N-glycosylated. These other glycosylations can also facilitate secretion. In terms of tissue distribution, expressed in fetal lung, but not in any adult tissues examined. Expression was detected in an osteosarcoma cDNA library.

It is found in the secreted. Its subcellular location is the extracellular space. The protein resides in the extracellular matrix. The chain is A disintegrin and metalloproteinase with thrombospondin motifs 19 (ADAMTS19) from Homo sapiens (Human).